The primary structure comprises 308 residues: Eukaryotic translation initiation factor 3 subunit G (308 aa).

Residues 1–23 are disordered; sequence MAPVAAPSTSQPAGGKPMNWADE. The RRM domain occupies 225–303; sequence PTLRVTNLSE…LILSCQWSLP (79 aa).

Belongs to the eIF-3 subunit G family. In terms of assembly, component of the eukaryotic translation initiation factor 3 (eIF-3) complex.

It localises to the cytoplasm. RNA-binding component of the eukaryotic translation initiation factor 3 (eIF-3) complex, which is involved in protein synthesis of a specialized repertoire of mRNAs and, together with other initiation factors, stimulates binding of mRNA and methionyl-tRNAi to the 40S ribosome. The eIF-3 complex specifically targets and initiates translation of a subset of mRNAs involved in cell proliferation. This subunit can bind 18S rRNA. The protein is Eukaryotic translation initiation factor 3 subunit G of Mycosarcoma maydis (Corn smut fungus).